A 320-amino-acid polypeptide reads, in one-letter code: MATAVGGGSDVEVGFAKLQGEDFEYYMQSYSIILGRNSKKATVDVDLSSLGGGMNISRNHARIFYDFTRRRFSLEVLGKNGCLVEGVLHLPGNPNVKLDSQDLLQIGDKEFYFLLPVRSILGGPLGPRHHVSGQTSVVPYHNYQSGPGSGSGKKGVRSRELYEYDDEDDDDDDDEEDDMRGSGKKTRRDGHEVVYASGEKKREGRSKVDREADDQQFLQLEEKDVVSSVATVLSDLCGPGEWMPMEKLHSVILKEYGNVWHHSRVRRYLSQEDWAIPEAKGKPWYGLLMLLRKYPEHFVINTRSKGRVTLEFVSLVTLLS.

A2 carries the N-acetylalanine modification. The region spanning 32–89 is the FHA domain; the sequence is IILGRNSKKATVDVDLSSLGGGMNISRNHARIFYDFTRRRFSLEVLGKNGCLVEGVLH. Positions 138-211 are disordered; it reads VPYHNYQSGP…REGRSKVDRE (74 aa). The segment covering 163-178 has biased composition (acidic residues); that stretch reads EYDDEDDDDDDDEEDD. The segment covering 198–210 has biased composition (basic and acidic residues); sequence GEKKREGRSKVDR.

As to expression, widely expressed.

Its subcellular location is the nucleus. May play a role in the control of plant organ development and specifically in the regulation of stamen development. Does not show transactivation activity in yeast. The polypeptide is FHA domain-containing protein FHA2 (Arabidopsis thaliana (Mouse-ear cress)).